We begin with the raw amino-acid sequence, 177 residues long: Large ribosomal subunit protein uL6 (177 aa).

The protein belongs to the universal ribosomal protein uL6 family. Part of the 50S ribosomal subunit.

This protein binds to the 23S rRNA, and is important in its secondary structure. It is located near the subunit interface in the base of the L7/L12 stalk, and near the tRNA binding site of the peptidyltransferase center. The protein is Large ribosomal subunit protein uL6 of Novosphingobium aromaticivorans (strain ATCC 700278 / DSM 12444 / CCUG 56034 / CIP 105152 / NBRC 16084 / F199).